The chain runs to 988 residues: Voltage-gated delayed rectifier potassium channel KCNH5 (988 aa).

Over 1-217 the chain is Cytoplasmic; that stretch reads MPGGKRGLVA…LHYCAFKTTW (217 aa). Residues 14–86 enclose the PAS domain; it reads TFLENIVRRS…TIEKVRQTFD (73 aa). In terms of domain architecture, PAC spans 91–143; that stretch reads NCFEVLLYKKNRTPVWFYMQIAPIRNEHEKVVLFLCTFKDITLFKQPIEDDST. The helical transmembrane segment at 218–238 threads the bilayer; that stretch reads DWVILILTFYTAIMVPYNVSF. The Extracellular segment spans residues 239 to 243; the sequence is KTKQN. A helical membrane pass occupies residues 244 to 264; it reads NIAWLVLDSVVDVIFLVDIVL. Residues 265–291 lie on the Cytoplasmic side of the membrane; sequence NFHTTFVGPGGEVISDPKLIRMNYLKT. Residues 292-312 traverse the membrane as a helical segment; it reads WFVIDLLSCLPYDIINAFENV. The Extracellular portion of the chain corresponds to 313–319; sequence DEGISSL. The chain crosses the membrane as a helical; Voltage-sensor span at residues 320–340; it reads FSSLKVVRLLRLGRVARKLDH. Residues 341 to 346 lie on the Cytoplasmic side of the membrane; the sequence is YLEYGA. The chain crosses the membrane as a helical span at residues 347-367; the sequence is AVLVLLVCVFGLVAHWLACIW. Topologically, residues 368–419 are extracellular; the sequence is YSIGDYEVIDEVTNTIQIDSWLYQLALSIGTPYRYNTSAGIWEGGPSKDSLY. N-linked (GlcNAc...) asparagine glycosylation is present at Asn-403. The pore-forming intramembrane region spans 420 to 440; sequence VSSLYFTMTSLTTIGFGNIAP. The short motif at 432–437 is the Selectivity filter element; that stretch reads TIGFGN. Residues 441–446 are Extracellular-facing; that stretch reads TTDVEK. Residues 447–467 traverse the membrane as a helical segment; it reads MFSVAMMMVGSLLYATIFGNV. The Cytoplasmic segment spans residues 468-988; the sequence is TTIFQQMYAN…PESDKDEINF (521 aa). Residue 550–668 participates in a nucleoside 3',5'-cyclic phosphate binding; that stretch reads AFRLASDGCL…SFSRNLTLTC (119 aa). Positions 704–715 are calmodulin-binding; sequence HPVRKLFQKFKQ. The tract at residues 721-741 is disordered; sequence IQGSAQSDPERSQLQVESRPL. Over residues 723–741 the composition is skewed to polar residues; sequence GSAQSDPERSQLQVESRPL. A Glycyl lysine isopeptide (Lys-Gly) (interchain with G-Cter in ubiquitin) cross-link involves residue Lys-785. Residues 838–893 form a disordered region; it reads GLLSEDPKGSDSENSVTKNPLRKTDSCDSGITKSDLRLDKAGEARSPLEHSPSQAD. The span at 871-885 shows a compositional bias: basic and acidic residues; the sequence is SDLRLDKAGEARSPL. The residue at position 883 (Ser-883) is a Phosphoserine. The segment at 909–948 is CAD (involved in subunit assembly); sequence TLQEVKHELKEDIQLLSCRMTALEKQVAEILKLLSEKSVP.

It belongs to the potassium channel family. H (Eag) (TC 1.A.1.20) subfamily. Kv10.2/KCNH5 sub-subfamily. Homotetramer. The potassium channel is probably composed of a homo- or heterotetrameric complex of pore-forming alpha subunits that can associate with modulating beta subunits. Heteromultimer with KCNH1/EAG.

It localises to the membrane. The catalysed reaction is K(+)(in) = K(+)(out). Its function is as follows. Pore-forming (alpha) subunit of a voltage-gated delayed rectifier potassium channel that mediates outward-rectifying potassium currents which, on depolarization, reaches a steady-state level and do not inactivate. The kinetic is characterized by a slow activation time course and a small voltage dependence of the activation time constants, therefore, starts to open at more negative voltages. The activation kinetics depend on the prepulse potential and external divalent cation concentration. The time course of activation is biphasic with a fast and a slowly activating current component. With negative prepulses, the current activation is delayed and slowed down several fold, whereas more positive prepulses speed up activation, therefore the activation rate depends on holding potential. This Mus musculus (Mouse) protein is Voltage-gated delayed rectifier potassium channel KCNH5.